The sequence spans 498 residues: Osteoclast stimulatory transmembrane protein (498 aa).

At 1 to 51 (MRTIRAATEHLFGLGWKFWRLGICKAVVPLQAAWKAFSQPVPASCNELLTQ) the chain is on the cytoplasmic side. The chain crosses the membrane as a helical span at residues 52–72 (LLLCVSLASLIAGLAHHWLVS). Residues 73–81 (LQLYPLGPP) lie on the Extracellular side of the membrane. Residues 82 to 102 (ALVTSLCGLFVFLSLGLVPPI) traverse the membrane as a helical segment. The Cytoplasmic portion of the chain corresponds to 103–121 (RCLFVLSVPTLGSKQGRRL). The helical transmembrane segment at 122 to 142 (LLSYSAANLAVAVVPNVLGNV) threads the bilayer. Residues 143-226 (RAAGQVLSCV…LARAALGTQR (84 aa)) are Extracellular-facing. A helical membrane pass occupies residues 227–247 (VVTGLFLLGLLGESAWYLHRY). Over 248 to 303 (LTDLRFDNIYATRQLVRQLAQAGATHLLTSPPPWLLQTAQPKLSREELLSCLLRLG) the chain is Cytoplasmic. A helical transmembrane segment spans residues 304-324 (LLALLLVATAVTVASDYGAFL). Residues 325 to 401 (LAQAAVAWAQ…QAQPPRVTAA (77 aa)) lie on the Extracellular side of the membrane. The helical transmembrane segment at 402 to 422 (LAAGALQLLAGATLVLQAYAW) threads the bilayer. At 423-498 (RLRHTIAASF…DSLGPPYDLE (76 aa)) the chain is on the cytoplasmic side. The tract at residues 449–498 (QRRHNQSDHLNKQPGTMATRESRKPGQGTRTLESQGPQAHDSLGPPYDLE) is disordered. Residues 476-485 (GTRTLESQGP) show a composition bias toward polar residues.

In terms of tissue distribution, expressed in osteoclast (at protein level). Ubiquitous. Highly expressed in multi-nuclear osteoclast cells compared to mono-nuclear macrophages. Expressed in foreign body giant cells (FBGCs).

The protein localises to the membrane. In terms of biological role, probable cell surface receptor that plays a role in cellular fusion and cell differentiation. Cooperates with DCSTAMP in modulating cell-cell fusion in both osteoclasts and foreign body giant cells (FBGCs). Involved in osteoclast bone resorption. Promotes osteoclast differentiation and may play a role in the multinucleated osteoclast maturation. This chain is Osteoclast stimulatory transmembrane protein (Ocstamp), found in Mus musculus (Mouse).